Reading from the N-terminus, the 712-residue chain is Effector protein HopM1 (712 aa).

The tract at residues 22–58 (DTVPAQTAHPNAVTAGMNPPLTPDQSGSHATESSSAG) is disordered. Positions 44-57 (PDQSGSHATESSSA) are enriched in polar residues.

Interacts with the chaperone ShcM. Interacts with host plant BIG5/ATMIN7.

It localises to the secreted. It is found in the host membrane. In terms of biological role, involved in the suppression of basal resistance and promotion of disease symptoms in plants. Mediates the ubiquitination and degradation, via the host proteasome, of a low-abundance immunity-associated protein in Arabidopsis thaliana. May be involved in the inhibition of a host vesicle trafficking pathway. This Pseudomonas syringae pv. tomato (strain ATCC BAA-871 / DC3000) protein is Effector protein HopM1 (hopM1).